Reading from the N-terminus, the 449-residue chain is Type 3 secretion system ATPase (449 aa).

178 to 183 (GCGKTT) lines the ATP pocket.

The protein belongs to the ATPase alpha/beta chains family. T3SS ATPase subfamily. In terms of assembly, the core secretion machinery of the T3SS is composed of approximately 20 different proteins, including cytoplasmic components, a base, an export apparatus and a needle. This subunit is part of the cytosolic complex. Forms homododecamers.

It localises to the cytoplasm. The catalysed reaction is ATP + H2O + cellular proteinSide 1 = ADP + phosphate + cellular proteinSide 2.. Its function is as follows. ATPase component of the type III secretion system (T3SS), also called injectisome, which is used to inject bacterial effector proteins into eukaryotic host cells. Acts as a molecular motor to provide the energy that is required for the export of proteins. Required for type III secretion apparatus (T3SA) formation, proper protein secretion, host cell invasion and virulence. May play a critical role in T3SS substrate recognition, disassembly of the effector/chaperone complex and unfolding of the effector in an ATP-dependent manner prior to secretion. The polypeptide is Type 3 secretion system ATPase (Pseudomonas syringae pv. tomato (strain ATCC BAA-871 / DC3000)).